The sequence spans 142 residues: MAKKITRVAKLEFMAMQAKPGAELASLGINMPAFTREFNDATKDRAGDVVPVVITAYDDKSFDFVLKTTPTAYMLKKVAKIEKGASNSRTQTVATVTLDDIRSIAEYKMPDLNANTIEAAMKQVIGTAKNMGIKVTGMEDFK.

Belongs to the universal ribosomal protein uL11 family. In terms of assembly, part of the ribosomal stalk of the 50S ribosomal subunit. Interacts with L10 and the large rRNA to form the base of the stalk. L10 forms an elongated spine to which L12 dimers bind in a sequential fashion forming a multimeric L10(L12)X complex. Post-translationally, one or more lysine residues are methylated.

Its function is as follows. Forms part of the ribosomal stalk which helps the ribosome interact with GTP-bound translation factors. The sequence is that of Large ribosomal subunit protein uL11 from Mycoplasma mycoides subsp. mycoides SC (strain CCUG 32753 / NCTC 10114 / PG1).